The primary structure comprises 562 residues: Dihydroxy-acid dehydratase (562 aa).

Asp-78 lines the Mg(2+) pocket. [2Fe-2S] cluster is bound at residue Cys-119. Mg(2+)-binding residues include Asp-120 and Lys-121. Lys-121 carries the post-translational modification N6-carboxylysine. Cys-192 serves as a coordination point for [2Fe-2S] cluster. Glu-450 contacts Mg(2+). The Proton acceptor role is filled by Ser-476.

Belongs to the IlvD/Edd family. Homodimer. [2Fe-2S] cluster is required as a cofactor. Mg(2+) serves as cofactor.

The catalysed reaction is (2R)-2,3-dihydroxy-3-methylbutanoate = 3-methyl-2-oxobutanoate + H2O. It catalyses the reaction (2R,3R)-2,3-dihydroxy-3-methylpentanoate = (S)-3-methyl-2-oxopentanoate + H2O. It functions in the pathway amino-acid biosynthesis; L-isoleucine biosynthesis; L-isoleucine from 2-oxobutanoate: step 3/4. The protein operates within amino-acid biosynthesis; L-valine biosynthesis; L-valine from pyruvate: step 3/4. Functions in the biosynthesis of branched-chain amino acids. Catalyzes the dehydration of (2R,3R)-2,3-dihydroxy-3-methylpentanoate (2,3-dihydroxy-3-methylvalerate) into 2-oxo-3-methylpentanoate (2-oxo-3-methylvalerate) and of (2R)-2,3-dihydroxy-3-methylbutanoate (2,3-dihydroxyisovalerate) into 2-oxo-3-methylbutanoate (2-oxoisovalerate), the penultimate precursor to L-isoleucine and L-valine, respectively. This Nautilia profundicola (strain ATCC BAA-1463 / DSM 18972 / AmH) protein is Dihydroxy-acid dehydratase.